A 273-amino-acid chain; its full sequence is NH(3)-dependent NAD(+) synthetase (273 aa).

34–41 serves as a coordination point for ATP; it reads GLSGGIDS. D40 contacts Mg(2+). R116 contacts deamido-NAD(+). Residue T136 participates in ATP binding. E141 contributes to the Mg(2+) binding site. ATP-binding residues include K165 and S187.

Belongs to the NAD synthetase family. In terms of assembly, homodimer.

The enzyme catalyses deamido-NAD(+) + NH4(+) + ATP = AMP + diphosphate + NAD(+) + H(+). The protein operates within cofactor biosynthesis; NAD(+) biosynthesis; NAD(+) from deamido-NAD(+) (ammonia route): step 1/1. Its function is as follows. Catalyzes the ATP-dependent amidation of deamido-NAD to form NAD. Uses ammonia as a nitrogen source. The chain is NH(3)-dependent NAD(+) synthetase from Trichlorobacter lovleyi (strain ATCC BAA-1151 / DSM 17278 / SZ) (Geobacter lovleyi).